The chain runs to 126 residues: Fluoride-specific ion channel FluC (126 aa).

The next 4 membrane-spanning stretches (helical) occupy residues 4–24 (PLLS…FLGL), 33–53 (IPLG…FAMA), 67–87 (FVIT…IEIV), and 97–117 (MAML…CLGL). Residues Gly74 and Thr77 each contribute to the Na(+) site.

This sequence belongs to the fluoride channel Fluc/FEX (TC 1.A.43) family.

It is found in the cell inner membrane. The catalysed reaction is fluoride(in) = fluoride(out). With respect to regulation, na(+) is not transported, but it plays an essential structural role and its presence is essential for fluoride channel function. In terms of biological role, fluoride-specific ion channel. Important for reducing fluoride concentration in the cell, thus reducing its toxicity. This Acinetobacter baumannii (strain ATCC 17978 / DSM 105126 / CIP 53.77 / LMG 1025 / NCDC KC755 / 5377) protein is Fluoride-specific ion channel FluC.